A 264-amino-acid chain; its full sequence is 3-methyl-2-oxobutanoate hydroxymethyltransferase (264 aa).

Mg(2+) is bound by residues Asp-45 and Asp-84. 3-methyl-2-oxobutanoate is bound by residues 45–46 (DS), Asp-84, and Lys-112. Residue Glu-114 coordinates Mg(2+). The active-site Proton acceptor is Glu-181.

It belongs to the PanB family. Homodecamer; pentamer of dimers. Requires Mg(2+) as cofactor.

It localises to the cytoplasm. It catalyses the reaction 3-methyl-2-oxobutanoate + (6R)-5,10-methylene-5,6,7,8-tetrahydrofolate + H2O = 2-dehydropantoate + (6S)-5,6,7,8-tetrahydrofolate. The protein operates within cofactor biosynthesis; (R)-pantothenate biosynthesis; (R)-pantoate from 3-methyl-2-oxobutanoate: step 1/2. Functionally, catalyzes the reversible reaction in which hydroxymethyl group from 5,10-methylenetetrahydrofolate is transferred onto alpha-ketoisovalerate to form ketopantoate. This is 3-methyl-2-oxobutanoate hydroxymethyltransferase from Shigella dysenteriae serotype 1 (strain Sd197).